A 422-amino-acid chain; its full sequence is Zinc-regulated transporter 2 (422 aa).

The Extracellular segment spans residues 1–27; that stretch reads MVDLIARDDSVDTCQASNGYNGHAGLR. The chain crosses the membrane as a helical span at residues 28–48; sequence ILAVFIILISSGLGVYFPILS. The Cytoplasmic portion of the chain corresponds to 49 to 60; that stretch reads SRYSFIRLPNWC. A helical membrane pass occupies residues 61–81; sequence FFIAKFFGSGVIVATAFVHLL. The Extracellular portion of the chain corresponds to 82–99; sequence QPAAEALGDECLGGTFAE. Residues 100–120 traverse the membrane as a helical segment; that stretch reads YPWAFGICLMSLFLLFFTEII. Residues 121–262 are Cytoplasmic-facing; that stretch reads THYFVAKTLG…EEDKEQYLNQ (142 aa). A phosphoserine mark is found at Ser148, Ser149, Ser162, and Ser170. Thr188 is subject to Phosphothreonine. A helical transmembrane segment spans residues 263 to 283; the sequence is ILAVFILEFGIIFHSVFVGLS. Residues 284-290 lie on the Extracellular side of the membrane; the sequence is LSVAGEE. A helical membrane pass occupies residues 291–311; the sequence is FETLFIVLTFHQMFEGLGLGT. Over 312 to 326 the chain is Cytoplasmic; it reads RVAETNWPESKKYMP. Residues 327 to 347 traverse the membrane as a helical segment; the sequence is WLMGLAFTLTSPIAVAVGIGV. At 348-358 the chain is on the extracellular side; it reads RHSWIPGSRRA. The chain crosses the membrane as a helical span at residues 359–379; the sequence is LIANGVFDSISSGILIYTGLV. At 380–400 the chain is on the cytoplasmic side; it reads ELMAHEFLYSNQFKGPDGLKK. Residues 401–421 form a helical membrane-spanning segment; the sequence is MLSAYLIMCCGAALMALLGKW. Ala422 is a topological domain (extracellular).

This sequence belongs to the ZIP transporter (TC 2.A.5) family.

It is found in the membrane. Its function is as follows. Low-affinity zinc transport protein. Active in zinc-replete cells and is time-, temperature- and concentration-dependent and prefers zinc over other metals as its substrate. The sequence is that of Zinc-regulated transporter 2 (ZRT2) from Saccharomyces cerevisiae (strain ATCC 204508 / S288c) (Baker's yeast).